A 213-amino-acid polypeptide reads, in one-letter code: Thiopurine S-methyltransferase (213 aa).

The S-adenosyl-L-methionine site is built by tryptophan 10, methionine 45, glutamate 66, and arginine 120.

It belongs to the class I-like SAM-binding methyltransferase superfamily. TPMT family.

It localises to the cytoplasm. It carries out the reaction S-adenosyl-L-methionine + a thiopurine = S-adenosyl-L-homocysteine + a thiopurine S-methylether.. The protein is Thiopurine S-methyltransferase of Photobacterium profundum (strain SS9).